The chain runs to 244 residues: Phosphoadenosine 5'-phosphosulfate reductase (244 aa).

Cys-239 acts as the Nucleophile; cysteine thiosulfonate intermediate in catalysis.

The protein belongs to the PAPS reductase family. CysH subfamily.

Its subcellular location is the cytoplasm. The enzyme catalyses [thioredoxin]-disulfide + sulfite + adenosine 3',5'-bisphosphate + 2 H(+) = [thioredoxin]-dithiol + 3'-phosphoadenylyl sulfate. It functions in the pathway sulfur metabolism; hydrogen sulfide biosynthesis; sulfite from sulfate: step 3/3. Catalyzes the formation of sulfite from phosphoadenosine 5'-phosphosulfate (PAPS) using thioredoxin as an electron donor. The chain is Phosphoadenosine 5'-phosphosulfate reductase from Klebsiella pneumoniae (strain 342).